The primary structure comprises 534 residues: DNA-directed RNA polymerase III subunit RPC3 (534 aa).

The interval 161-181 is disordered; sequence PSVPTTENSDPGPPPPAPTLV. Phosphoserine is present on S194. Residues 197 to 228 form a disordered region; it reads GKGKRRRSSDEDAAGEPKAKRPKYTTDNKEPI. A compositionally biased stretch (basic and acidic residues) spans 211–228; sequence GEPKAKRPKYTTDNKEPI.

It belongs to the eukaryotic RPC3/POLR3C RNA polymerase subunit family. Component of the RNA polymerase III complex consisting of 17 subunits: a ten-subunit horseshoe-shaped catalytic core composed of POLR3A/RPC1, POLR3B/RPC2, POLR1C/RPAC1, POLR1D/RPAC2, POLR3K/RPC10, POLR2E/RPABC1, POLR2F/RPABC2, POLR2H/RPABC3, POLR2K/RPABC4 and POLR2L/RPABC5; a mobile stalk composed of two subunits POLR3H/RPC8 and CRCP/RPC9, protruding from the core and functioning primarily in transcription initiation; and additional subunits homologous to general transcription factors of the RNA polymerase II machinery, POLR3C/RPC3-POLR3F/RPC6-POLR3G/RPC7 heterotrimer required for transcription initiation and POLR3D/RPC4-POLR3E/RPC5 heterodimer involved in both transcription initiation and termination. Directly interacts with POLR3G/RPC7 and POLR3GL. Directly interacts with POLR3F/RPC6. Interacts with GTF3C4. As part of the RNA polymerase III complex, interacts with PKP2.

The protein resides in the nucleus. In terms of biological role, DNA-dependent RNA polymerase catalyzes the transcription of DNA into RNA using the four ribonucleoside triphosphates as substrates. Specific peripheric component of RNA polymerase III (Pol III) which synthesizes small non-coding RNAs including 5S rRNA, snRNAs, tRNAs and miRNAs from at least 500 distinct genomic loci. Part of POLR3C/RPC3-POLR3F/RPC6-POLR3G/RPC7 heterotrimer, coordinates the dynamics of Pol III stalk and clamp modules during the transition from apo to elongation state. Pol III plays a key role in sensing and limiting infection by intracellular bacteria and DNA viruses. Acts as a nuclear and cytosolic DNA sensor involved in innate immune response. Can sense non-self dsDNA that serves as template for transcription into dsRNA. The non-self RNA polymerase III transcripts, such as Epstein-Barr virus-encoded RNAs (EBERs) induce type I interferon and NF-kappa-B through the RIG-I pathway. Preferentially binds single-stranded DNA (ssDNA) in a sequence-independent manner. In Homo sapiens (Human), this protein is DNA-directed RNA polymerase III subunit RPC3.